The following is a 672-amino-acid chain: MGIRGLMSFVEDYSNEFFVDLKLRNTKLIIDGYSLFHRLCFNSDLELRYGGDYDLFADVVQKFFESLFVCHICPYVVLDGGCDISDKKLTTLKDRAKEKIQAARSLSLGGGGNVCPLLIREVFIQVLIRLEVCFVQSFSEADRDIMTLANHWNCPVLSSDSDFCIFDLRSGFCSLNSFQWRNLNTIKDTQDYYIPARSFSLNAFCHYFNNMNKALLPLFAVLCGNDHVNLPIMDTFISKVRLPLSSKGRRYHRVLGLLNWLSHFDDPTEALDNVLKSLPKKSRENVKELLCCSMEEYQQSPVKLQDFFQYGSYVCTDASDLGLPEWVLGALAKGQLPPFISDALVLRRTFLHTQVENMQRPNAHRISQPIRQIIYGLLLNGPSHAEDIAQNTLPSQLLAFNEVERIDTNIKTSTVYAKQLLKDQCDLSKLAELPLARRQMLLLEALKVKQVVLESIPTFLKLPIAVTCYWLQSTEAKAKLHHLQALLLGMLREPLHAIVNSPGTEDPQRGGAKMLYEELCQVKAPMRPGPRVDLDTAHVFCQWQSCLQMGLYLNQLLSTPLPEPNLTWLYNGSLVHRLCQQLPASSSVESLLSLCPEAKQLYEHLFNATKSYAPAELFLPKTKSKSKKKRQKKKVASLGTTADAKHWYDRSNRFGPLMPESLEEHVENSELE.

Residues 349-398 are interaction with SHLD2; the sequence is TFLHTQVENMQRPNAHRISQPIRQIIYGLLLNGPSHAEDIAQNTLPSQLL.

It belongs to the asteroid family. Interacts with SHLD1, SHLD2, SHLD3, RIF1 and MAD2L2/REV7.

Functionally, structure-specific DNA endonuclease that specifically cleaves single-stranded DNA and 3' overhang DNA. Contributes to the control of DNA double-strand break repair choice by antagonizing BRCA1-dependent homologous recombination (HR) and promoting non-homologous end-joining (NHEJ). Recruited to the single-stranded DNA ends by SHLD2 and cleaves the 3' exposed DNA ends, therefore inhibiting DNA end resection (necessary for HR) and promoting DNA end protection (necessary for NHEJ). The protein is Single-strand DNA endonuclease ASTE1 (Aste1) of Mus musculus (Mouse).